Here is a 533-residue protein sequence, read N- to C-terminus: Ribonuclease III domain-containing protein RNC1, chloroplastic (533 aa).

Residues 1–30 constitute a chloroplast transit peptide; the sequence is MAPPAMAFQALALGPLPLPLPAARRRRRVR. Disordered stretches follow at residues 31-57 and 66-85; these read VLAV…NSPS and RKKA…ILKP. Residues 39-53 show a composition bias toward pro residues; the sequence is TPPPPPSPSSPPEPA. The segment covering 69-82 has biased composition (basic residues); the sequence is AVSPKKKHPPRRFI. 2 RNase III domains span residues 164–279 and 411–511; these read LLYL…LCFG and EHPR…CVYG.

In terms of assembly, interacts with RNA. Part of large ribonucleo-protein particles that contain CAF1 and/or CAF2.

The protein localises to the plastid. Its subcellular location is the chloroplast. Binds specific group II introns in chloroplasts and facilitates their splicing. Acts on both subgroup IIA and subgroup IIB introns. The substrates of the subgroup II also require the CRM domain proteins CAF1 or CAF2. Binds both single-stranded and double-stranded RNA non-specifically, but lacks endonuclease activity. Required for plastid ribosome biogenesis. In Oryza sativa subsp. japonica (Rice), this protein is Ribonuclease III domain-containing protein RNC1, chloroplastic.